Reading from the N-terminus, the 210-residue chain is Redox-sensing transcriptional repressor Rex (210 aa).

The H-T-H motif DNA-binding region spans 15–54; sequence LYYRIFKRFNTDGIEKASSKQIADALGIDSATVRRDFSYF. Residue 89–94 participates in NAD(+) binding; the sequence is GCGNIG.

The protein belongs to the transcriptional regulatory Rex family. Homodimer.

The protein resides in the cytoplasm. In terms of biological role, modulates transcription in response to changes in cellular NADH/NAD(+) redox state. The polypeptide is Redox-sensing transcriptional repressor Rex (Streptococcus agalactiae serotype Ia (strain ATCC 27591 / A909 / CDC SS700)).